Consider the following 632-residue polypeptide: tRNA-guanine(15) transglycosylase (632 aa).

The Nucleophile role is filled by Asp86. The substrate site is built by Asp121 and Gly186. In terms of domain architecture, PUA spans 553 to 628; it reads AMRVTVSKES…IAVKVHEGRD (76 aa).

This sequence belongs to the archaeosine tRNA-ribosyltransferase family. Requires Zn(2+) as cofactor.

It catalyses the reaction guanosine(15) in tRNA + 7-cyano-7-deazaguanine = 7-cyano-7-carbaguanosine(15) in tRNA + guanine. It functions in the pathway tRNA modification; archaeosine-tRNA biosynthesis. Functionally, exchanges the guanine residue with 7-cyano-7-deazaguanine (preQ0) at position 15 in the dihydrouridine loop (D-loop) of archaeal tRNAs. This Thermoplasma acidophilum (strain ATCC 25905 / DSM 1728 / JCM 9062 / NBRC 15155 / AMRC-C165) protein is tRNA-guanine(15) transglycosylase.